Consider the following 535-residue polypeptide: Phosphoenolpyruvate carboxykinase (ATP) (535 aa).

Substrate-binding residues include Arg59, Tyr201, and Lys207. Residues Lys207, His226, and 243 to 251 contribute to the ATP site; that span reads GLSGTGKTT. Mn(2+)-binding residues include Lys207 and His226. Asp264 is a Mn(2+) binding site. ATP contacts are provided by residues Glu292, Arg328, 444–445, and Thr450; that span reads RI. Arg328 is a binding site for substrate.

It belongs to the phosphoenolpyruvate carboxykinase (ATP) family. Mn(2+) serves as cofactor.

Its subcellular location is the cytoplasm. It catalyses the reaction oxaloacetate + ATP = phosphoenolpyruvate + ADP + CO2. The protein operates within carbohydrate biosynthesis; gluconeogenesis. Its function is as follows. Involved in the gluconeogenesis. Catalyzes the conversion of oxaloacetate (OAA) to phosphoenolpyruvate (PEP) through direct phosphoryl transfer between the nucleoside triphosphate and OAA. This is Phosphoenolpyruvate carboxykinase (ATP) from Porphyromonas gingivalis (strain ATCC BAA-308 / W83).